A 98-amino-acid polypeptide reads, in one-letter code: Integration host factor subunit alpha (98 aa).

Positions 49 to 71 (FGNFDLRDKNQRPGRNPKTGEDI) are disordered.

It belongs to the bacterial histone-like protein family. In terms of assembly, heterodimer of an alpha and a beta chain.

Functionally, this protein is one of the two subunits of integration host factor, a specific DNA-binding protein that functions in genetic recombination as well as in transcriptional and translational control. The chain is Integration host factor subunit alpha from Pectobacterium atrosepticum (strain SCRI 1043 / ATCC BAA-672) (Erwinia carotovora subsp. atroseptica).